The chain runs to 436 residues: 3-ketoacyl-CoA thiolase (436 aa).

The active-site Acyl-thioester intermediate is C99. Active-site proton acceptor residues include H392 and C422.

The protein belongs to the thiolase-like superfamily. Thiolase family. Heterotetramer of two alpha chains (FadJ) and two beta chains (FadI).

The protein localises to the cytoplasm. It catalyses the reaction an acyl-CoA + acetyl-CoA = a 3-oxoacyl-CoA + CoA. The protein operates within lipid metabolism; fatty acid beta-oxidation. Its function is as follows. Catalyzes the final step of fatty acid oxidation in which acetyl-CoA is released and the CoA ester of a fatty acid two carbons shorter is formed. The protein is 3-ketoacyl-CoA thiolase of Shewanella baltica (strain OS185).